Here is a 130-residue protein sequence, read N- to C-terminus: uncharacterized protein (130 aa).

The next 3 helical transmembrane spans lie at 34–54 (AILI…FAFF), 73–93 (LLLT…GWLA), and 107–127 (FGTG…IVWI).

It localises to the cell membrane. This is an uncharacterized protein from Mycoplasma pneumoniae (strain ATCC 29342 / M129 / Subtype 1) (Mycoplasmoides pneumoniae).